The chain runs to 510 residues: ATP synthase subunit alpha (510 aa).

169-176 (GDRQTGKT) lines the ATP pocket.

It belongs to the ATPase alpha/beta chains family. In terms of assembly, F-type ATPases have 2 components, CF(1) - the catalytic core - and CF(0) - the membrane proton channel. CF(1) has five subunits: alpha(3), beta(3), gamma(1), delta(1), epsilon(1). CF(0) has three main subunits: a(1), b(2) and c(9-12). The alpha and beta chains form an alternating ring which encloses part of the gamma chain. CF(1) is attached to CF(0) by a central stalk formed by the gamma and epsilon chains, while a peripheral stalk is formed by the delta and b chains.

It localises to the cell inner membrane. The catalysed reaction is ATP + H2O + 4 H(+)(in) = ADP + phosphate + 5 H(+)(out). Produces ATP from ADP in the presence of a proton gradient across the membrane. The alpha chain is a regulatory subunit. This Rickettsia peacockii (strain Rustic) protein is ATP synthase subunit alpha.